The following is a 102-amino-acid chain: Small ribosomal subunit protein uS10 (102 aa).

A disordered region spans residues 34–58; sequence LSGPVPLPTKTLEIPARKSPDGEGT.

The protein belongs to the universal ribosomal protein uS10 family. As to quaternary structure, part of the 30S ribosomal subunit.

In terms of biological role, involved in the binding of tRNA to the ribosomes. The polypeptide is Small ribosomal subunit protein uS10 (Natronomonas pharaonis (strain ATCC 35678 / DSM 2160 / CIP 103997 / JCM 8858 / NBRC 14720 / NCIMB 2260 / Gabara) (Halobacterium pharaonis)).